The sequence spans 406 residues: Argininosuccinate synthase (406 aa).

ATP-binding positions include 13–21 (AYSGGLDTS) and A40. The L-citrulline site is built by Y91 and S96. Residue G121 participates in ATP binding. L-aspartate contacts are provided by T123, N127, and D128. N127 is a binding site for L-citrulline. L-citrulline is bound by residues R131, S182, S191, E267, and Y279.

Belongs to the argininosuccinate synthase family. Type 1 subfamily. Homotetramer.

Its subcellular location is the cytoplasm. The catalysed reaction is L-citrulline + L-aspartate + ATP = 2-(N(omega)-L-arginino)succinate + AMP + diphosphate + H(+). The protein operates within amino-acid biosynthesis; L-arginine biosynthesis; L-arginine from L-ornithine and carbamoyl phosphate: step 2/3. In Brucella suis biovar 1 (strain 1330), this protein is Argininosuccinate synthase.